We begin with the raw amino-acid sequence, 132 residues long: Small ribosomal subunit protein uS8 (132 aa).

Belongs to the universal ribosomal protein uS8 family. As to quaternary structure, part of the 30S ribosomal subunit. Contacts proteins S5 and S12.

Functionally, one of the primary rRNA binding proteins, it binds directly to 16S rRNA central domain where it helps coordinate assembly of the platform of the 30S subunit. The sequence is that of Small ribosomal subunit protein uS8 from Staphylococcus saprophyticus subsp. saprophyticus (strain ATCC 15305 / DSM 20229 / NCIMB 8711 / NCTC 7292 / S-41).